The sequence spans 229 residues: Large ribosomal subunit protein uL1 (229 aa).

This sequence belongs to the universal ribosomal protein uL1 family. As to quaternary structure, part of the 50S ribosomal subunit.

Binds directly to 23S rRNA. The L1 stalk is quite mobile in the ribosome, and is involved in E site tRNA release. Functionally, protein L1 is also a translational repressor protein, it controls the translation of the L11 operon by binding to its mRNA. In Clostridium beijerinckii (strain ATCC 51743 / NCIMB 8052) (Clostridium acetobutylicum), this protein is Large ribosomal subunit protein uL1.